The chain runs to 1006 residues: Probable beta-galactosidase A (1006 aa).

The N-terminal stretch at 1–18 (MKLLSVCAIALLAAQAAG) is a signal peptide. 4 residues coordinate substrate: Tyr96, Asn140, Ala141, and Glu142. Asn156 carries an N-linked (GlcNAc...) asparagine glycan. Residue Asn199 coordinates substrate. Glu200 functions as the Proton donor in the catalytic mechanism. Cys205 and Cys206 are disulfide-bonded. Substrate is bound at residue Tyr260. Cys266 and Cys315 are disulfide-bonded. Glu298 functions as the Nucleophile in the catalytic mechanism. Tyr364 lines the substrate pocket. Residues Asn373, Asn402, Asn422, Asn622, Asn760, Asn777, and Asn914 are each glycosylated (N-linked (GlcNAc...) asparagine).

The protein belongs to the glycosyl hydrolase 35 family.

It localises to the secreted. The catalysed reaction is Hydrolysis of terminal non-reducing beta-D-galactose residues in beta-D-galactosides.. Functionally, cleaves beta-linked terminal galactosyl residues from gangliosides, glycoproteins, and glycosaminoglycans. The protein is Probable beta-galactosidase A (lacA) of Aspergillus fumigatus (strain ATCC MYA-4609 / CBS 101355 / FGSC A1100 / Af293) (Neosartorya fumigata).